The primary structure comprises 254 residues: Thiazole synthase (254 aa).

The Schiff-base intermediate with DXP role is filled by K95. 1-deoxy-D-xylulose 5-phosphate is bound by residues G156, A182 to G183, and N204 to T205.

The protein belongs to the ThiG family. Homotetramer. Forms heterodimers with either ThiH or ThiS.

The protein localises to the cytoplasm. It carries out the reaction [ThiS sulfur-carrier protein]-C-terminal-Gly-aminoethanethioate + 2-iminoacetate + 1-deoxy-D-xylulose 5-phosphate = [ThiS sulfur-carrier protein]-C-terminal Gly-Gly + 2-[(2R,5Z)-2-carboxy-4-methylthiazol-5(2H)-ylidene]ethyl phosphate + 2 H2O + H(+). Its pathway is cofactor biosynthesis; thiamine diphosphate biosynthesis. Catalyzes the rearrangement of 1-deoxy-D-xylulose 5-phosphate (DXP) to produce the thiazole phosphate moiety of thiamine. Sulfur is provided by the thiocarboxylate moiety of the carrier protein ThiS. In vitro, sulfur can be provided by H(2)S. The polypeptide is Thiazole synthase (Vibrio atlanticus (strain LGP32) (Vibrio splendidus (strain Mel32))).